The sequence spans 477 residues: Bifunctional protein HldE (477 aa).

The segment at 1–318 is ribokinase; it reads MKVTLPEFER…ENAVRGRADT (318 aa). K179 bears the N6-acetyllysine mark. 195–198 is a binding site for ATP; the sequence is NLSE. Residue D264 is part of the active site. The segment at 344 to 477 is cytidylyltransferase; it reads MTNGVFDILH…IKKIQQDKKG (134 aa).

This sequence in the N-terminal section; belongs to the carbohydrate kinase PfkB family. In the C-terminal section; belongs to the cytidylyltransferase family. Homodimer.

The enzyme catalyses D-glycero-beta-D-manno-heptose 7-phosphate + ATP = D-glycero-beta-D-manno-heptose 1,7-bisphosphate + ADP + H(+). The catalysed reaction is D-glycero-beta-D-manno-heptose 1-phosphate + ATP + H(+) = ADP-D-glycero-beta-D-manno-heptose + diphosphate. Its pathway is nucleotide-sugar biosynthesis; ADP-L-glycero-beta-D-manno-heptose biosynthesis; ADP-L-glycero-beta-D-manno-heptose from D-glycero-beta-D-manno-heptose 7-phosphate: step 1/4. It functions in the pathway nucleotide-sugar biosynthesis; ADP-L-glycero-beta-D-manno-heptose biosynthesis; ADP-L-glycero-beta-D-manno-heptose from D-glycero-beta-D-manno-heptose 7-phosphate: step 3/4. The protein operates within bacterial outer membrane biogenesis; LPS core biosynthesis. In terms of biological role, catalyzes the phosphorylation of D-glycero-D-manno-heptose 7-phosphate at the C-1 position to selectively form D-glycero-beta-D-manno-heptose-1,7-bisphosphate. Catalyzes the ADP transfer from ATP to D-glycero-beta-D-manno-heptose 1-phosphate, yielding ADP-D-glycero-beta-D-manno-heptose. The sequence is that of Bifunctional protein HldE from Shigella flexneri.